Here is a 300-residue protein sequence, read N- to C-terminus: uncharacterized protein (300 aa).

The Periplasmic segment spans residues 1 to 7 (MGSTRKG). Residues 8–28 (MLNVLIAAVLWGSSGVCAQYI) traverse the membrane as a helical segment. Residues 16–145 (VLWGSSGVCA…SLIGTFLLVT (130 aa)) form the EamA 1 domain. Residues 29–45 (MEQSRMSSQFLTMIRLL) are Cytoplasmic-facing. Residues 46–66 (FAGLILVTFSFMHGDKIFSIL) traverse the membrane as a helical segment. The Periplasmic portion of the chain corresponds to 67–71 (KNRKD). The chain crosses the membrane as a helical span at residues 72–92 (ALSLLIFSVVGALTVQLTFLL). The Cytoplasmic portion of the chain corresponds to 93 to 99 (TIEKSNA). Residues 100–120 (ATATVLQFLSPTIIVAWFALA) form a helical membrane-spanning segment. The Periplasmic portion of the chain corresponds to 121–124 (RRTR). The helical transmembrane segment at 125 to 145 (PGILVLTAILTSLIGTFLLVT) threads the bilayer. Residues 146–151 (HGNPTS) lie on the Cytoplasmic side of the membrane. A helical transmembrane segment spans residues 152–172 (LSISSAALFWGIASAFAAAFY). An EamA 2 domain is found at 167–291 (FAAAFYTTWP…ILSSVILISL (125 aa)). The Periplasmic portion of the chain corresponds to 173–184 (TTWPSRLIAQYG). A helical transmembrane segment spans residues 185-205 (TLPVVGWSMSFGGLILLPFYA). Over 206-216 (KEGTHFAVSGS) the chain is Cytoplasmic. The helical transmembrane segment at 217 to 237 (LILAFFYLVVIGTSLTFSLYL) threads the bilayer. Residues 238–263 (KGAQLIGGPKASILSCAEPLSSALLS) lie on the Periplasmic side of the membrane. Residues 264–284 (LLLLGISFTLPDWLGTLLILS) form a helical membrane-spanning segment. Residues 285–300 (SVILISLDSRRRARAA) lie on the Cytoplasmic side of the membrane.

Belongs to the EamA transporter family.

It is found in the cell inner membrane. This is an uncharacterized protein from Salmonella typhimurium (strain LT2 / SGSC1412 / ATCC 700720).